The sequence spans 354 residues: DNA replication and repair protein RecF (354 aa).

ATP is bound at residue 30–37 (GDNGSGKT).

This sequence belongs to the RecF family.

It is found in the cytoplasm. In terms of biological role, the RecF protein is involved in DNA metabolism; it is required for DNA replication and normal SOS inducibility. RecF binds preferentially to single-stranded, linear DNA. It also seems to bind ATP. The chain is DNA replication and repair protein RecF from Idiomarina loihiensis (strain ATCC BAA-735 / DSM 15497 / L2-TR).